The chain runs to 116 residues: uncharacterized protein (116 aa).

The segment at valine 76–asparagine 116 is disordered. Low complexity predominate over residues arginine 85 to asparagine 99.

This is an uncharacterized protein from Glycine max (Soybean).